The sequence spans 94 residues: Co-chaperonin GroES (94 aa).

It belongs to the GroES chaperonin family. In terms of assembly, heptamer of 7 subunits arranged in a ring. Interacts with the chaperonin GroEL.

It is found in the cytoplasm. In terms of biological role, together with the chaperonin GroEL, plays an essential role in assisting protein folding. The GroEL-GroES system forms a nano-cage that allows encapsulation of the non-native substrate proteins and provides a physical environment optimized to promote and accelerate protein folding. GroES binds to the apical surface of the GroEL ring, thereby capping the opening of the GroEL channel. The protein is Co-chaperonin GroES of Anoxybacillus flavithermus (strain DSM 21510 / WK1).